The sequence spans 312 residues: Protoheme IX farnesyltransferase (312 aa).

8 helical membrane passes run 31–51 (VMSLVVFTALVGLLMAPGSFH), 52–72 (PVLAITAIICIAVGGGAAGAL), 119–139 (ILVNWIAAGLLAFTIFFYVVI), 152–172 (IVIGGAAGALPPVVAWASVTG), 179–199 (ILLFLIIFFWTPPHFWALALF), 225–245 (ILLYTVALVAVAAAPWPLGYF), 247–267 (VIYGVASLALGGWMLVLAVRV), and 288–308 (ILYLFALFAILLVEVVAAAVL).

Belongs to the UbiA prenyltransferase family. Protoheme IX farnesyltransferase subfamily.

Its subcellular location is the cell inner membrane. The catalysed reaction is heme b + (2E,6E)-farnesyl diphosphate + H2O = Fe(II)-heme o + diphosphate. The protein operates within porphyrin-containing compound metabolism; heme O biosynthesis; heme O from protoheme: step 1/1. Functionally, converts heme B (protoheme IX) to heme O by substitution of the vinyl group on carbon 2 of heme B porphyrin ring with a hydroxyethyl farnesyl side group. The protein is Protoheme IX farnesyltransferase of Rhodopseudomonas palustris (strain ATCC BAA-98 / CGA009).